The chain runs to 996 residues: Low-density lipoprotein receptor-related protein 8 (996 aa).

An N-terminal signal peptide occupies residues 1-28; that stretch reads MGRPELGALRPLALLLLLLLQLQHLSAA. The Extracellular segment spans residues 29 to 858; the sequence is DPLPGGQGPV…GSQMGSTVTA (830 aa). 8 LDL-receptor class A domains span residues 40-76, 79-117, 120-158, 160-196, 199-238, 250-287, 290-326, and 330-369; these read ECEE…DDCP, TCAD…ATCS, ECPA…AGCP, LCAP…RGCS, ACPP…ELCG, ACAP…ADCS, PCRE…AGCL, and TCEG…KVCG. Disulfide bonds link Cys41–Cys53, Cys48–Cys66, Cys60–Cys75, Cys80–Cys92, Cys87–Cys105, Cys99–Cys116, Cys121–Cys135, Cys128–Cys148, Cys142–Cys157, Cys161–Cys173, Cys168–Cys186, Cys180–Cys195, Cys200–Cys213, Cys207–Cys226, Cys220–Cys237, Cys251–Cys264, Cys259–Cys277, Cys271–Cys286, Cys291–Cys303, Cys298–Cys316, Cys310–Cys325, Cys331–Cys344, Cys339–Cys357, Cys351–Cys368, Cys373–Cys384, Cys380–Cys393, Cys395–Cys407, Cys413–Cys423, Cys419–Cys432, and Cys434–Cys447. Ca(2+) is bound by residues Trp58, Asp61, Asp63, Asp65, Asp71, and Glu72. Asn170 is a glycosylation site (N-linked (GlcNAc...) asparagine). Residues 364–408 enclose the EGF-like 1 domain; sequence PQKVCGLNECLHNNGGCSHICTDLKIGFECTCPAGFQLLDQKTCG. The EGF-like 2; calcium-binding domain occupies 409–448; the sequence is DIDECQDPDACSQICVNYKGYFKCECHPGYEMDTLTKNCK. LDL-receptor class B repeat units follow at residues 495-541, 542-584, 585-628, 629-671, and 672-714; these read NRIY…DWVH, KHIY…DPLR, GFMY…DLLS, QRLY…AVFE, and DKVF…FHEL. Asn551 carries N-linked (GlcNAc...) asparagine glycosylation. The segment at 773-831 is clustered O-linked oligosaccharides; it reads STSTTTLASAMTRTVPATTRAPGTTIHDPTYQNHSTETPSQTAAAPHSVNVPRAPSTSP. The segment at 778–851 is disordered; it reads TLASAMTRTV…SQHYGNEGSQ (74 aa). Residues 802 to 815 show a composition bias toward polar residues; sequence TYQNHSTETPSQTA. A glycan (N-linked (GlcNAc...) asparagine) is linked at Asn805. A compositionally biased stretch (low complexity) spans 824-839; the sequence is PRAPSTSPSTPSPATS. N-linked (GlcNAc...) asparagine glycosylation occurs at Asn840. Positions 840 to 851 are enriched in polar residues; the sequence is NHSQHYGNEGSQ. Residues 859–881 form a helical membrane-spanning segment; sequence AVIGVIVPIVVIALLCMSGYLIW. Residues 882-996 lie on the Cytoplasmic side of the membrane; sequence RNWKRKNTKS…ALSLEDDGLP (115 aa).

It belongs to the LDLR family. As to quaternary structure, homooligomer. Interacts with VLDLR. Reelin associates with two or more receptor molecules. Interacts with DAB1 and JNK-interacting proteins. Interacts with SNX17. Interacts with PCSK9. Interacts with MDK; this interaction is calcium dependent. Interacts with CLU. In terms of processing, O-glycosylated. Some alternatively spliced isoforms lack the O-linked sugar domain. Post-translationally, undergoes sequential, furin and gamma-secretase dependent, proteolytic processing, resulting in the extracellular release of the entire ligand-binding domain as a soluble polypeptide and in the intracellular domain (ICD) release into the cytoplasm. The gamma-secretase-dependent proteolytical processing occurs after the bulk of the extracellular domain has been shed, in a furin-dependent manner, in alternatively spliced isoforms carrying the furin cleavage site. Hypoglycosylation (mainly hypo-O-glycosylation) leads to increased extracellular cleavage, which in turn results in accelerating release of the intracellular domain (ICD) by the gamma-secretase. The resulting receptor fragment is able to inhibit Reelin signaling and in particular the Reelin-induced DAB1 phosphorylation. Tyrosine phosphorylated upon apoE binding. In terms of processing, ubiquitinated by MYLIP leading to degradation. Expressed in neurons throughout the brain, with strong expression in pyramidal neurons of the hippocampus, granule cells of the dentate gyrus, cortical neurons and Purkinje cells of the cerebellum. Also expressed in the epithelium of the choroid plexus and of the blood vessels (apical expression), as well as in the epididymis.

The protein localises to the cell membrane. It is found in the secreted. Cell surface receptor for Reelin (RELN) and apolipoprotein E (apoE)-containing ligands. LRP8 participates in transmitting the extracellular Reelin signal to intracellular signaling processes, by binding to DAB1 on its cytoplasmic tail. Reelin acts via both the VLDL receptor (VLDLR) and LRP8 to regulate DAB1 tyrosine phosphorylation and microtubule function in neurons. LRP8 has higher affinity for Reelin than VLDLR. LRP8 is thus a key component of the Reelin pathway which governs neuronal layering of the forebrain during embryonic brain development. Binds the endoplasmic reticulum resident receptor-associated protein (RAP). Binds dimers of beta 2-glycoprotein I and may be involved in the suppression of platelet aggregation in the vasculature. Highly expressed in the initial segment of the epididymis, where it affects the functional expression of clusterin and phospholipid hydroperoxide glutathione peroxidase (PHGPx), two proteins required for sperm maturation. May also function as an endocytic receptor. Not required for endocytic uptake of SEPP1 in the kidney which is mediated by LRP2. Together with its ligand, apolipoprotein E (apoE), may indirectly play a role in the suppression of the innate immune response by controlling the survival of myeloid-derived suppressor cells. The sequence is that of Low-density lipoprotein receptor-related protein 8 (Lrp8) from Mus musculus (Mouse).